Consider the following 448-residue polypeptide: Trk system potassium uptake protein TrkA homolog 1 (448 aa).

One can recognise an RCK N-terminal 1 domain in the interval 1-124 (MKAVIIGAGE…RAQVGVDLMI (124 aa)). NAD(+) is bound by residues 7–11 (GAGEV), D29, 70–71 (TG), and R101. An RCK C-terminal 1 domain is found at 144-225 (IDAEMFAEGK…MEDLESVFGS (82 aa)). An RCK N-terminal 2 domain is found at 230-348 (RTRILLIGCG…FEMVGIDMAV (119 aa)). NAD(+) is bound at residue 232 to 262 (RILLIGCGIVGMYLAKLIDKEENADLRIIEH). The 81-residue stretch at 368–448 (QTLTTIEGER…AASEVEKYFK (81 aa)) folds into the RCK C-terminal 2 domain.

Its function is as follows. Part of a potassium transport system. This Methanosarcina mazei (strain ATCC BAA-159 / DSM 3647 / Goe1 / Go1 / JCM 11833 / OCM 88) (Methanosarcina frisia) protein is Trk system potassium uptake protein TrkA homolog 1 (trkA1).